Here is a 444-residue protein sequence, read N- to C-terminus: Glycogen synthase (444 aa).

R15 is an ADP-alpha-D-glucose binding site.

The protein belongs to the glycosyltransferase 1 family. Bacterial/plant glycogen synthase subfamily.

The enzyme catalyses [(1-&gt;4)-alpha-D-glucosyl](n) + ADP-alpha-D-glucose = [(1-&gt;4)-alpha-D-glucosyl](n+1) + ADP + H(+). It participates in glycan biosynthesis; glycogen biosynthesis. Functionally, synthesizes alpha-1,4-glucan chains using ADP-glucose. The polypeptide is Glycogen synthase (Deinococcus radiodurans (strain ATCC 13939 / DSM 20539 / JCM 16871 / CCUG 27074 / LMG 4051 / NBRC 15346 / NCIMB 9279 / VKM B-1422 / R1)).